We begin with the raw amino-acid sequence, 1339 residues long: DNA polymerase alpha catalytic subunit (1339 aa).

Disordered stretches follow at residues 1 to 29 (MEDW…SEEE) and 60 to 89 (AKRR…HQQK). Basic and acidic residues predominate over residues 8-19 (RSEEQKRCEEKG). Positions 1179, 1182, 1215, 1218, 1235, 1244, 1274, and 1289 each coordinate Zn(2+). Residues 1179–1218 (CTHCQLVVPVDPHKYINDMFSSREKPPPTAPFELYVCFNC) form a CysA-type zinc finger. Residues 1244 to 1274 (CSGGNVASVRALRAQFTYLRAMFDVPQALNC) carry the CysB motif motif.

This sequence belongs to the DNA polymerase type-B family.

The protein resides in the nucleus. It carries out the reaction DNA(n) + a 2'-deoxyribonucleoside 5'-triphosphate = DNA(n+1) + diphosphate. Functionally, polymerase alpha in a complex with DNA primase is a replicative polymerase. In Trypanosoma brucei brucei, this protein is DNA polymerase alpha catalytic subunit.